A 238-amino-acid polypeptide reads, in one-letter code: Ribosomal RNA small subunit methyltransferase G (238 aa).

Residues Gly-77, Phe-82, 128–129, and Arg-147 contribute to the S-adenosyl-L-methionine site; that span reads AE. Positions 219–238 are disordered; sequence KKTPARYPRKPGTPNKQPIQ.

Belongs to the methyltransferase superfamily. RNA methyltransferase RsmG family.

It is found in the cytoplasm. Functionally, specifically methylates the N7 position of guanine in position 535 of 16S rRNA. In Geobacillus thermodenitrificans (strain NG80-2), this protein is Ribosomal RNA small subunit methyltransferase G.